The chain runs to 230 residues: Ureidoacrylate amidohydrolase RutB (230 aa).

The Proton acceptor role is filled by Asp24. Lys133 is an active-site residue. Cys166 acts as the Nucleophile in catalysis.

Belongs to the isochorismatase family. RutB subfamily.

It carries out the reaction (Z)-3-ureidoacrylate + H2O + H(+) = (Z)-3-aminoacrylate + NH4(+) + CO2. The catalysed reaction is (Z)-3-ureidoacrylate + H2O = (Z)-3-aminoacrylate + carbamate + H(+). It catalyses the reaction (Z)-2-methylureidoacrylate + H2O + H(+) = (Z)-2-methylaminoacrylate + NH4(+) + CO2. Functionally, hydrolyzes ureidoacrylate to form aminoacrylate and carbamate. The carbamate hydrolyzes spontaneously, thereby releasing one of the nitrogen atoms of the pyrimidine ring as ammonia and one of its carbon atoms as CO2. The sequence is that of Ureidoacrylate amidohydrolase RutB from Escherichia coli O6:K15:H31 (strain 536 / UPEC).